We begin with the raw amino-acid sequence, 278 residues long: Cation-dependent mannose-6-phosphate receptor (278 aa).

An N-terminal signal peptide occupies residues 1 to 21 (MFPLSGCWRTELLLLLLLAVA). Residues 22–188 (VRESWQIEEK…ACSPEVSHLS (167 aa)) are Lumenal-facing. The MRH domain maps to 31-182 (KSCDLVGEKD…EMDSSLACSP (152 aa)). A disulfide bridge connects residues Cys33 and Cys79. Asn58, Asn84, Asn95, Asn108, and Asn114 each carry an N-linked (GlcNAc...) asparagine glycan. Intrachain disulfides connect Cys133/Cys168 and Cys146/Cys180. A helical transmembrane segment spans residues 189–209 (VGSILLVIFASLVAVYIIGGF). At 210-278 (LYQRLVVGAK…EERDDHLLPM (69 aa)) the chain is on the cytoplasmic side. The interval 256 to 278 (YRGVGDDQLGEESEERDDHLLPM) is disordered. At Ser268 the chain carries Phosphoserine.

In terms of assembly, homodimer. Binds GGA1, GGA2 and GGA3.

The protein resides in the lysosome membrane. Functionally, transport of phosphorylated lysosomal enzymes from the Golgi complex and the cell surface to lysosomes. Lysosomal enzymes bearing phosphomannosyl residues bind specifically to mannose-6-phosphate receptors in the Golgi apparatus and the resulting receptor-ligand complex is transported to an acidic prelyosomal compartment where the low pH mediates the dissociation of the complex. This Rattus norvegicus (Rat) protein is Cation-dependent mannose-6-phosphate receptor (M6pr).